Here is a 483-residue protein sequence, read N- to C-terminus: Protein nucleotidyltransferase YdiU (483 aa).

Positions 100, 102, 103, 123, 135, 136, 189, and 196 each coordinate ATP. Residue aspartate 265 is the Proton acceptor of the active site. Residues asparagine 266 and aspartate 275 each coordinate Mg(2+). Aspartate 275 lines the ATP pocket.

It belongs to the SELO family. Mg(2+) serves as cofactor. Mn(2+) is required as a cofactor.

The enzyme catalyses L-seryl-[protein] + ATP = 3-O-(5'-adenylyl)-L-seryl-[protein] + diphosphate. The catalysed reaction is L-threonyl-[protein] + ATP = 3-O-(5'-adenylyl)-L-threonyl-[protein] + diphosphate. It carries out the reaction L-tyrosyl-[protein] + ATP = O-(5'-adenylyl)-L-tyrosyl-[protein] + diphosphate. It catalyses the reaction L-histidyl-[protein] + UTP = N(tele)-(5'-uridylyl)-L-histidyl-[protein] + diphosphate. The enzyme catalyses L-seryl-[protein] + UTP = O-(5'-uridylyl)-L-seryl-[protein] + diphosphate. The catalysed reaction is L-tyrosyl-[protein] + UTP = O-(5'-uridylyl)-L-tyrosyl-[protein] + diphosphate. In terms of biological role, nucleotidyltransferase involved in the post-translational modification of proteins. It can catalyze the addition of adenosine monophosphate (AMP) or uridine monophosphate (UMP) to a protein, resulting in modifications known as AMPylation and UMPylation. This chain is Protein nucleotidyltransferase YdiU, found in Gloeobacter violaceus (strain ATCC 29082 / PCC 7421).